Here is a 77-residue protein sequence, read N- to C-terminus: Small ribosomal subunit protein bS20 (77 aa).

The protein belongs to the bacterial ribosomal protein bS20 family.

Binds directly to 16S ribosomal RNA. This Lactococcus lactis subsp. cremoris (strain MG1363) protein is Small ribosomal subunit protein bS20.